The sequence spans 839 residues: Amyloid-beta A4 precursor protein-binding family A member 1 (839 aa).

Disordered regions lie at residues 1-118 (MNHL…DESA), 235-346 (RLHH…EKRD), and 362-437 (VKTR…ESRK). The segment covering 23-38 (ESVEADLEHPEVEEEQ) has biased composition (acidic residues). Position 79 is a phosphoserine (S79). Basic and acidic residues-rich tracts occupy residues 103–112 (DGYEAERAQD) and 237–255 (HHYD…KEAE). A munc-18-1 binding region spans residues 227–315 (YRQEALGARL…TPGGGHPDSP (89 aa)). Residues S243, S247, S249, S264, S281, and S286 each carry the phosphoserine modification. T306 carries the phosphothreonine modification. Phosphoserine occurs at positions 314 and 369. T372 carries the phosphothreonine modification. Residues 375–438 (EPKEPIWVMR…ASTNKESRKS (64 aa)) form an LIN-2/CASK binding region. Over residues 389–400 (PTRDCDDQRPVD) the composition is skewed to basic and acidic residues. The span at 401–417 (GDSPSPGSSSPLGAESS) shows a compositional bias: low complexity. Phosphoserine is present on residues S403, S405, S410, and S570. The region spanning 459-645 (DGIIFAANYL…LLNTQDMYND (187 aa)) is the PID domain. Positions 628 to 643 (LSQKEYSDLLNTQDMY) are autoinhibitory helix linker. PDZ domains follow at residues 658 to 744 (DVFI…IVRC) and 749 to 824 (TVLI…TMPA).

Part of a multimeric complex containing STXBP1 and STX1A. Interacts with STXBP1. Component of the brain-specific heterotrimeric complex (LIN-10-LIN-2-LIN-7 complex) composed of at least APBA1, CASK, and LIN7, which associates with the motor protein KIF17 to transport vesicles along microtubules. Within the complex, interacts (via PDZ domain) with the motor protein KIF17; the interaction is direct and is required for association of KIF17 with the cargo that is to be transported. Binds to the cytoplasmic domain of amyloid protein (APP). Interacts (via PDZ 1 and 2 domains) with FSPB. Isoform 2 interacts (via its truncated PID domain) with active, GTP-bound RAB6A and RAB6B. Brain. Detected in the cerebellum, hippocampus, olfactory system, piriform and entorhinal cortex, supraoptic nucleus of the hypothalamus, substantia nigra, and other mesencephalic areas.

Its subcellular location is the cytoplasm. The protein resides in the perinuclear region. The protein localises to the nucleus. It is found in the golgi apparatus. Functionally, putative function in synaptic vesicle exocytosis by binding to Munc18-1, an essential component of the synaptic vesicle exocytotic machinery. May modulate processing of the amyloid-beta precursor protein (APP) and hence formation of APP-beta. The chain is Amyloid-beta A4 precursor protein-binding family A member 1 (Apba1) from Rattus norvegicus (Rat).